A 293-amino-acid chain; its full sequence is Elongation factor Ts (293 aa).

The interval 80 to 83 (TDFV) is involved in Mg(2+) ion dislocation from EF-Tu.

It belongs to the EF-Ts family.

It localises to the cytoplasm. Its function is as follows. Associates with the EF-Tu.GDP complex and induces the exchange of GDP to GTP. It remains bound to the aminoacyl-tRNA.EF-Tu.GTP complex up to the GTP hydrolysis stage on the ribosome. This chain is Elongation factor Ts, found in Burkholderia thailandensis (strain ATCC 700388 / DSM 13276 / CCUG 48851 / CIP 106301 / E264).